Reading from the N-terminus, the 640-residue chain is 1-deoxy-D-xylulose-5-phosphate synthase (640 aa).

Thiamine diphosphate is bound by residues His79 and 120–122; that span reads AHS. Residue Asp151 participates in Mg(2+) binding. Thiamine diphosphate contacts are provided by residues 152 to 153, Asn180, Tyr289, and Glu371; that span reads GA. Asn180 provides a ligand contact to Mg(2+).

Belongs to the transketolase family. DXPS subfamily. In terms of assembly, homodimer. Mg(2+) is required as a cofactor. The cofactor is thiamine diphosphate.

It carries out the reaction D-glyceraldehyde 3-phosphate + pyruvate + H(+) = 1-deoxy-D-xylulose 5-phosphate + CO2. It participates in metabolic intermediate biosynthesis; 1-deoxy-D-xylulose 5-phosphate biosynthesis; 1-deoxy-D-xylulose 5-phosphate from D-glyceraldehyde 3-phosphate and pyruvate: step 1/1. Its function is as follows. Catalyzes the acyloin condensation reaction between C atoms 2 and 3 of pyruvate and glyceraldehyde 3-phosphate to yield 1-deoxy-D-xylulose-5-phosphate (DXP). The protein is 1-deoxy-D-xylulose-5-phosphate synthase of Novosphingobium aromaticivorans (strain ATCC 700278 / DSM 12444 / CCUG 56034 / CIP 105152 / NBRC 16084 / F199).